A 297-amino-acid polypeptide reads, in one-letter code: MGFVKVVKNKQYFKRYQVRFRRRREGKTDYYARKRLIFQDKNKYNTPKYRLIVRLSNRDITCQIAYARIEGDRIVCAAYSHELPRYGVKVGLTNYAAAYCTGLLVARRILQKLRLDTLYTGCTDVTGEEYLVEPVDDGPGAFRCYLDVGLARTTTGARIFGAMKGAVDGGLNIPHSVKRFPGYSAENKSFNAEVHRAHIFGQHVADYMRTLEEEDEDAYKRQFSKYIALGIKADDIETIYKNAHAGIRKDPAFHKKPEKKVTKKRFNLAKLTLEARKAKIAKHKADFLAKIQADVEA.

This sequence belongs to the universal ribosomal protein uL18 family. Component of the large ribosomal subunit (LSU).

The protein localises to the cytoplasm. The protein resides in the nucleus. In terms of biological role, component of the ribosome, a large ribonucleoprotein complex responsible for the synthesis of proteins in the cell. The small ribosomal subunit (SSU) binds messenger RNAs (mRNAs) and translates the encoded message by selecting cognate aminoacyl-transfer RNA (tRNA) molecules. The large subunit (LSU) contains the ribosomal catalytic site termed the peptidyl transferase center (PTC), which catalyzes the formation of peptide bonds, thereby polymerizing the amino acids delivered by tRNAs into a polypeptide chain. The nascent polypeptides leave the ribosome through a tunnel in the LSU and interact with protein factors that function in enzymatic processing, targeting, and the membrane insertion of nascent chains at the exit of the ribosomal tunnel. This is Large ribosomal subunit protein uL18 (RpL5) from Aedes aegypti (Yellowfever mosquito).